The following is a 165-amino-acid chain: UPF0303 protein BTH_I2506 (165 aa).

This sequence belongs to the UPF0303 family.

This chain is UPF0303 protein BTH_I2506, found in Burkholderia thailandensis (strain ATCC 700388 / DSM 13276 / CCUG 48851 / CIP 106301 / E264).